The primary structure comprises 216 residues: Large ribosomal subunit protein uL1y (216 aa).

Belongs to the universal ribosomal protein uL1 family. Interacts with the GTPase NUG2.

This Arabidopsis thaliana (Mouse-ear cress) protein is Large ribosomal subunit protein uL1y (RPL10AB).